We begin with the raw amino-acid sequence, 613 residues long: TANK-binding kinase 1-binding protein 1 (613 aa).

The tract at residues 1–280 is homodimerization; that stretch reads MESMFEDDIS…QDLASNQSEC (280 aa). A coiled-coil region spans residues 48–162; sequence YGDIKERLGG…ALVETHLRQI (115 aa). Residue serine 184 is modified to Phosphoserine. Residues 218 to 277 are a coiled coil; that stretch reads TSVSVSELERRRLEEALEAAQGEARGAQLREEQLQAECERLQGELKQLQETRAQDLASNQ. The tract at residues 281–330 is interaction with TBK1 and IKBKE; the sequence is GMAWVKRVGDDQVNLALAYTELTEELGRLRELSSLQGRILRTLLQEQARN. The segment at 328-457 is disordered; that stretch reads ARNAGQRHSP…HHAKAGFQGR (130 aa). The span at 346–361 shows a compositional bias: pro residues; sequence PACPSPSPPARPPPCA. A compositionally biased stretch (low complexity) spans 362-372; it reads PCQSPAAQRRS. Residues serine 365, serine 372, serine 379, serine 385, serine 400, and serine 415 each carry the phosphoserine modification. Positions 389 to 406 are enriched in pro residues; the sequence is PSCPSPVPQRRSPVPPSC. The segment covering 416–433 has biased composition (pro residues); the sequence is PVPPSCPAPQPRPPPPPG. Serine 502 and serine 532 each carry phosphoserine. The UBZ1-type zinc-finger motif lies at 581–607; that stretch reads IRSCPLCQLGFPVGYPDDALIKHIDSH. Residues cysteine 584, cysteine 587, histidine 603, and histidine 607 each contribute to the Zn(2+) site.

As to quaternary structure, homodimer. May form a heterodimer with NAP1. Interacts with TKB1 and IKBKE. Weakly interacts with DDX3X.

In terms of biological role, adapter protein which constitutively binds TBK1 and IKBKE playing a role in antiviral innate immunity. Essential for the efficient induction of IRF-dependent transcription following infection with Sendai virus. The sequence is that of TANK-binding kinase 1-binding protein 1 from Rattus norvegicus (Rat).